Here is a 106-residue protein sequence, read N- to C-terminus: uncharacterized protein (106 aa).

A run of 2 helical transmembrane segments spans residues 53–70 and 74–93; these read LLLL…LDII and ILGL…WTLI.

The protein localises to the cell membrane. This is an uncharacterized protein from Bacillus subtilis (strain 168).